Here is an 84-residue protein sequence, read N- to C-terminus: U4-theraphotoxin-Hhn1a (84 aa).

An N-terminal signal peptide occupies residues 1-22 (MKVTLIAILTRAAVLVLHTTAA). The propeptide occupies 23 to 47 (EELEESQLMEVSMPDTELAAVDEER). 3 disulfides stabilise this stretch: Cys51–Cys65, Cys55–Cys76, and Cys70–Cys81.

The protein belongs to the neurotoxin 12 (Hwtx-2) family. 02 (Hwtx-2) subfamily. In terms of tissue distribution, expressed by the venom gland.

The protein resides in the secreted. Postsynaptic neurotoxin. The sequence is that of U4-theraphotoxin-Hhn1a from Cyriopagopus hainanus (Chinese bird spider).